Here is a 122-residue protein sequence, read N- to C-terminus: Large ribosomal subunit protein uL14 (122 aa).

It belongs to the universal ribosomal protein uL14 family. As to quaternary structure, part of the 50S ribosomal subunit. Forms a cluster with proteins L3 and L19. In the 70S ribosome, L14 and L19 interact and together make contacts with the 16S rRNA in bridges B5 and B8.

Binds to 23S rRNA. Forms part of two intersubunit bridges in the 70S ribosome. The sequence is that of Large ribosomal subunit protein uL14 from Endomicrobium trichonymphae.